The primary structure comprises 604 residues: Protein glass (604 aa).

Disordered stretches follow at residues 111–139 (ISTT…HGYW), 199–237 (NSHN…GGNN), 359–400 (LPPL…SPTS), and 414–434 (EDEE…GGEM). Low complexity-rich tracts occupy residues 117–126 (ASSGNGSSNN) and 200–237 (SHNH…GGNN). Acidic residues predominate over residues 414–427 (EDEEDSNEDLDGDE). 5 consecutive C2H2-type zinc fingers follow at residues 437–459 (NLCR…LRTH), 465–487 (YRCP…VRTH), 493–515 (FRCP…MRTH), 521–543 (YRCS…LRIH), and 549–571 (YQCK…MRVH). A disordered region spans residues 566-604 (RHMRVHGNNNSSNGSNGATGVGGESSTGSGVGGGNSLLT). Over residues 572 to 581 (GNNNSSNGSN) the composition is skewed to low complexity. Positions 582-604 (GATGVGGESSTGSGVGGGNSLLT) are enriched in gly residues.

The protein localises to the nucleus. In terms of biological role, transcription factor required for gene expression specific to photoreceptor cells. This chain is Protein glass (gl), found in Drosophila melanogaster (Fruit fly).